The primary structure comprises 193 residues: Proton-translocating ferredoxin:NAD(+) oxidoreductase complex subunit A (193 aa).

Transmembrane regions (helical) follow at residues 11–31 (AVVV…FFGV), 39–59 (VGMG…AWVV), 62–82 (FVLI…LLIA), 102–122 (MWGI…VPIL), 134–154 (VVNA…MASL), and 171–191 (GVAF…SGMI).

It belongs to the NqrDE/RnfAE family. As to quaternary structure, the complex is composed of six subunits: RnfA, RnfB, RnfC, RnfD, RnfE and RnfG.

Its subcellular location is the cell membrane. Its function is as follows. Part of a membrane-bound complex that couples electron transfer with translocation of ions across the membrane. Couples electron transfer from reduced ferredoxin to NAD(+) with translocation of H(+) out of the cell. Essential for energy conservation during autotrophic growth. Contributes to ATP synthesis during heterotrophic growth. This is Proton-translocating ferredoxin:NAD(+) oxidoreductase complex subunit A from Clostridium ljungdahlii (strain ATCC 55383 / DSM 13528 / PETC).